A 77-amino-acid polypeptide reads, in one-letter code: MAAIEVGRVCIKTLGREAGNTCVIVEVLDKNFVVIDGSVKRRRCNLKHFEPTDKKVDLEKAASTEEVKLALDAAGLL.

This sequence belongs to the eukaryotic ribosomal protein eL14 family.

This chain is Large ribosomal subunit protein eL14, found in Methanococcus maripaludis (strain C5 / ATCC BAA-1333).